Reading from the N-terminus, the 556-residue chain is Polypyrimidine tract-binding protein 1 (556 aa).

Methionine 1 carries the N-acetylmethionine modification. Phosphoserine is present on serine 16. The tract at residues 35–54 (ASAANGNDSKKFKGDNRSTG) is disordered. 3 RRM domains span residues 58–142 (RVIH…SSPN), 183–259 (LRII…FSKL), and 362–436 (SVLL…LSKH). Lysine 64 participates in a covalent cross-link: Glycyl lysine isopeptide (Lys-Gly) (interchain with G-Cter in SUMO2). At tyrosine 126 the chain carries Phosphotyrosine. At threonine 137 the chain carries Phosphothreonine. Residue serine 140 is modified to Phosphoserine. A Glycyl lysine isopeptide (Lys-Gly) (interchain with G-Cter in SUMO2) cross-link involves residue lysine 217. Residues 436 to 458 (HQSVQLPREGQEDQGLTKDYGSS) form a disordered region. Serine 458 bears the Phosphoserine mark. The 76-residue stretch at 479 to 554 (ATLHLSNIPP…HHLRVSFSKS (76 aa)) folds into the RRM 4 domain.

As to quaternary structure, monomer. Part of a ternary complex containing KHSRP, PTBP1, PTBP2 and HNRPH1. Interacts with RAVER1 and SFPQ.

The protein localises to the nucleus. Functionally, plays a role in pre-mRNA splicing and in the regulation of alternative splicing events. Activates exon skipping of its own pre-mRNA during muscle cell differentiation. Binds to the polypyrimidine tract of introns. May promote RNA looping when bound to two separate polypyrimidine tracts in the same pre-mRNA. May promote the binding of U2 snRNP to pre-mRNA. Cooperates with RAVER1 to modulate switching between mutually exclusive exons during maturation of the TPM1 pre-mRNA. Represses the splicing of MAPT/Tau exon 10. Binds to polypyrimidine-rich controlling element (PCE) of CFTR and promotes exon skipping of CFTR exon 9, thereby antagonizing TIA1 and its role in exon inclusion of CFTR exon 9. Plays a role in the splicing of pyruvate kinase PKM by binding repressively to a polypyrimidine tract flanking PKM exon 9, inhibiting exon 9 inclusion and resulting in exon 10 inclusion and production of the PKM M2 isoform. This chain is Polypyrimidine tract-binding protein 1 (Ptbp1), found in Rattus norvegicus (Rat).